Here is a 279-residue protein sequence, read N- to C-terminus: tRNA pseudouridine synthase B (279 aa).

Aspartate 38 serves as the catalytic Nucleophile.

The protein belongs to the pseudouridine synthase TruB family. Type 1 subfamily.

It catalyses the reaction uridine(55) in tRNA = pseudouridine(55) in tRNA. Functionally, responsible for synthesis of pseudouridine from uracil-55 in the psi GC loop of transfer RNAs. The protein is tRNA pseudouridine synthase B of Acholeplasma laidlawii (strain PG-8A).